A 271-amino-acid chain; its full sequence is Troponin T, fast skeletal muscle (271 aa).

Residues 1–21 show a composition bias toward acidic residues; it reads MSDEEVEHVEEEYEEEEEAQE. The interval 1–74 is disordered; sequence MSDEEVEHVE…EKVDFDDIQK (74 aa). At serine 2 the chain carries N-acetylserine. Residue serine 2 is modified to Phosphoserine. Composition is skewed to basic and acidic residues over residues 31-53 and 62-74; these read PEVH…EKPR and PEGE…DIQK. A Phosphoserine modification is found at serine 90. Basic and acidic residues predominate over residues 113–155; it reads RAERAEQQRIRAEKERERQNRLAEEKARREEEDAKRRAEDDLK. Residues 113–194 form a disordered region; it reads RAERAEQQRI…REMKKKVLAE (82 aa). Serine 161, serine 168, and serine 169 each carry phosphoserine. Residues 183 to 194 show a composition bias toward basic and acidic residues; sequence TAREMKKKVLAE. Serine 205 is modified (phosphoserine). Tyrosine 221 bears the Phosphotyrosine mark. The interval 248–271 is disordered; the sequence is IDQAQKHSKKAGTAPKGKVGGRWK.

This sequence belongs to the troponin T family.

In terms of biological role, troponin T is the tropomyosin-binding subunit of troponin, the thin filament regulatory complex which confers calcium-sensitivity to striated muscle actomyosin ATPase activity. The protein is Troponin T, fast skeletal muscle (Tnnt3) of Bos taurus (Bovine).